The chain runs to 31 residues: Cytochrome b6-f complex subunit 6 (31 aa).

A helical membrane pass occupies residues 4-26 (ITSYFGFLLAALTVTSALFIGLS).

This sequence belongs to the PetL family. The 4 large subunits of the cytochrome b6-f complex are cytochrome b6, subunit IV (17 kDa polypeptide, PetD), cytochrome f and the Rieske protein, while the 4 small subunits are PetG, PetL, PetM and PetN. The complex functions as a dimer.

It is found in the plastid. The protein resides in the chloroplast thylakoid membrane. Functionally, component of the cytochrome b6-f complex, which mediates electron transfer between photosystem II (PSII) and photosystem I (PSI), cyclic electron flow around PSI, and state transitions. PetL is important for photoautotrophic growth as well as for electron transfer efficiency and stability of the cytochrome b6-f complex. In Daucus carota (Wild carrot), this protein is Cytochrome b6-f complex subunit 6.